The chain runs to 502 residues: Probable malate:quinone oxidoreductase (502 aa).

The protein belongs to the MQO family. FAD serves as cofactor.

It catalyses the reaction (S)-malate + a quinone = a quinol + oxaloacetate. Its pathway is carbohydrate metabolism; tricarboxylic acid cycle; oxaloacetate from (S)-malate (quinone route): step 1/1. The chain is Probable malate:quinone oxidoreductase from Synechococcus sp. (strain CC9605).